The primary structure comprises 135 residues: VHWTAEEKALVNVVWSKTDHQAVVANALGRLFVVYPWTKTYFTKFNGKAGDSTVQTHAGKVVSALTLAYNHIDDVKPHFKHYEGFHVDPENFRLLANCLNVELGHTLHKEFTPELHAAWNKFSNVVVDALSKAYQ.

Positions 2 to 135 (HWTAEEKALV…VVDALSKAYQ (134 aa)) constitute a Globin domain. Positions 57 and 81 each coordinate heme b.

Belongs to the globin family. In terms of assembly, hb 3 is a heterotetramer of two alpha and two beta-3 chains. As to expression, red blood cells (at protein level).

Its function is as follows. Involved in oxygen transport from gills to the various peripheral tissues. The sequence is that of Hemoglobin subunit beta-3 from Somniosus microcephalus (Greenland sleeper shark).